The following is a 220-amino-acid chain: Large ribosomal subunit protein uL3 (220 aa).

The tract at residues 145-169 (GPASHGSKFHRRPGSSGNRTWPGRV) is disordered.

This sequence belongs to the universal ribosomal protein uL3 family. As to quaternary structure, part of the 50S ribosomal subunit. Forms a cluster with proteins L14 and L19.

In terms of biological role, one of the primary rRNA binding proteins, it binds directly near the 3'-end of the 23S rRNA, where it nucleates assembly of the 50S subunit. The sequence is that of Large ribosomal subunit protein uL3 from Bdellovibrio bacteriovorus (strain ATCC 15356 / DSM 50701 / NCIMB 9529 / HD100).